Here is an 860-residue protein sequence, read N- to C-terminus: Tetratricopeptide repeat protein 13 (860 aa).

7 TPR repeats span residues 143–176 (TNEE…EPDL), 216–248 (PEVF…LQPS), 249–282 (ARLY…NKNQ), 284–316 (IAML…KVDF), 317–350 (IDAY…NQNH), 352–384 (QTLQ…EPYN), and 386–418 (VCQY…DPLP).

The chain is Tetratricopeptide repeat protein 13 (TTC13) from Homo sapiens (Human).